The primary structure comprises 303 residues: Recombination-associated protein RdgC (303 aa).

Belongs to the RdgC family.

It localises to the cytoplasm. Its subcellular location is the nucleoid. In terms of biological role, may be involved in recombination. The polypeptide is Recombination-associated protein RdgC (Yersinia enterocolitica serotype O:8 / biotype 1B (strain NCTC 13174 / 8081)).